A 74-amino-acid polypeptide reads, in one-letter code: MADTEKLKMLGKIVEVLQGGNFRVQLENGITIMSHVSGKMRVNKINILPGDTVDVELSPYDLTRGRITYRHRDN.

Positions 1–72 (MADTEKLKML…TRGRITYRHR (72 aa)) constitute an S1-like domain.

Belongs to the IF-1 family. As to quaternary structure, component of the 30S ribosomal translation pre-initiation complex which assembles on the 30S ribosome in the order IF-2 and IF-3, IF-1 and N-formylmethionyl-tRNA(fMet); mRNA recruitment can occur at any time during PIC assembly.

The protein resides in the cytoplasm. In terms of biological role, one of the essential components for the initiation of protein synthesis. Stabilizes the binding of IF-2 and IF-3 on the 30S subunit to which N-formylmethionyl-tRNA(fMet) subsequently binds. Helps modulate mRNA selection, yielding the 30S pre-initiation complex (PIC). Upon addition of the 50S ribosomal subunit IF-1, IF-2 and IF-3 are released leaving the mature 70S translation initiation complex. The chain is Translation initiation factor IF-1 from Ureaplasma parvum serovar 3 (strain ATCC 700970).